We begin with the raw amino-acid sequence, 134 residues long: Large ribosomal subunit protein uL16c (134 aa).

This sequence belongs to the universal ribosomal protein uL16 family. In terms of assembly, part of the 50S ribosomal subunit.

It localises to the plastid. The protein localises to the chloroplast. The protein is Large ribosomal subunit protein uL16c of Pinus thunbergii (Japanese black pine).